The primary structure comprises 632 residues: Cyclic GMP-AMP synthase-like receptor 2 (632 aa).

Residues D71, D73, and D181 each coordinate Mg(2+). D295 contacts Mn(2+).

This sequence belongs to the mab-21 family. It depends on Mg(2+) as a cofactor. Mn(2+) is required as a cofactor.

Nucleotidyltransferase that catalyzes the formation of some cyclic nucleotide and plays a key role in innate immunity. Directly binds some unknown ligand, activating the nucleotidyltransferase activity, leading to synthesis of a second messenger that binds to and activates Sting, thereby triggering the immune response via activation of the NF-kappa-B transcription factor. The sequence is that of Cyclic GMP-AMP synthase-like receptor 2 from Crassostrea virginica (Eastern oyster).